Here is a 182-residue protein sequence, read N- to C-terminus: Large ribosomal subunit protein uL6 (182 aa).

It belongs to the universal ribosomal protein uL6 family. Part of the 50S ribosomal subunit.

This protein binds to the 23S rRNA, and is important in its secondary structure. It is located near the subunit interface in the base of the L7/L12 stalk, and near the tRNA binding site of the peptidyltransferase center. This chain is Large ribosomal subunit protein uL6, found in Desulforamulus reducens (strain ATCC BAA-1160 / DSM 100696 / MI-1) (Desulfotomaculum reducens).